The primary structure comprises 133 residues: Small ribosomal subunit protein uS8 (133 aa).

This sequence belongs to the universal ribosomal protein uS8 family. As to quaternary structure, part of the 30S ribosomal subunit. Contacts proteins S5 and S12.

In terms of biological role, one of the primary rRNA binding proteins, it binds directly to 16S rRNA central domain where it helps coordinate assembly of the platform of the 30S subunit. The sequence is that of Small ribosomal subunit protein uS8 from Deinococcus deserti (strain DSM 17065 / CIP 109153 / LMG 22923 / VCD115).